The following is a 475-amino-acid chain: Ribulose bisphosphate carboxylase large chain (475 aa).

Substrate-binding residues include Asn-123 and Thr-173. The Proton acceptor role is filled by Lys-175. Lys-177 is a binding site for substrate. 3 residues coordinate Mg(2+): Lys-201, Asp-203, and Glu-204. At Lys-201 the chain carries N6-carboxylysine. His-294 acts as the Proton acceptor in catalysis. Substrate is bound by residues Arg-295, His-327, and Ser-379.

The protein belongs to the RuBisCO large chain family. Type I subfamily. In terms of assembly, heterohexadecamer of 8 large chains and 8 small chains. Mg(2+) is required as a cofactor.

The protein localises to the plastid. It is found in the chloroplast. It carries out the reaction 2 (2R)-3-phosphoglycerate + 2 H(+) = D-ribulose 1,5-bisphosphate + CO2 + H2O. The catalysed reaction is D-ribulose 1,5-bisphosphate + O2 = 2-phosphoglycolate + (2R)-3-phosphoglycerate + 2 H(+). Functionally, ruBisCO catalyzes two reactions: the carboxylation of D-ribulose 1,5-bisphosphate, the primary event in carbon dioxide fixation, as well as the oxidative fragmentation of the pentose substrate in the photorespiration process. Both reactions occur simultaneously and in competition at the same active site. This is Ribulose bisphosphate carboxylase large chain from Bigelowiella natans (Pedinomonas minutissima).